Reading from the N-terminus, the 190-residue chain is Threonylcarbamoyl-AMP synthase (190 aa).

One can recognise a YrdC-like domain in the interval 7–190 (TGSIAAAVDL…ALTGELFRQG (184 aa)).

The protein belongs to the SUA5 family. TsaC subfamily.

The protein resides in the cytoplasm. The catalysed reaction is L-threonine + hydrogencarbonate + ATP = L-threonylcarbamoyladenylate + diphosphate + H2O. In terms of biological role, required for the formation of a threonylcarbamoyl group on adenosine at position 37 (t(6)A37) in tRNAs that read codons beginning with adenine. Catalyzes the conversion of L-threonine, HCO(3)(-)/CO(2) and ATP to give threonylcarbamoyl-AMP (TC-AMP) as the acyladenylate intermediate, with the release of diphosphate. The protein is Threonylcarbamoyl-AMP synthase of Salmonella choleraesuis (strain SC-B67).